Reading from the N-terminus, the 480-residue chain is Protein DETOXIFICATION 15 (480 aa).

12 helical membrane-spanning segments follow: residues 36–56, 69–89, 118–138, 143–163, 180–200, 208–228, 255–275, 294–314, 326–346, 360–380, 396–416, and 428–448; these read GPLIAVSLLQFCLQIISVMFV, IATSFASVTGFTFLMGTASAM, LLSVPLSIVWANTEHFLVFFG, IAHLSGSYARFMIPSIFAYGL, VVICSGVTTSLHVIICWVLVL, GAAVANAISYWLNVILLSCYV, LVIPSAFMVCSLEMWSFELLV, VWMIPFGLSGAASTRVSNELG, RVVLSFSIVESILVGTVLILI, VVSHVASMLPILALGHSLDSF, IGAFVNLGSYYLVGVPFGLLL, and WLGIICALIVQGVCLSLITFF.

It belongs to the multi antimicrobial extrusion (MATE) (TC 2.A.66.1) family.

It is found in the membrane. This chain is Protein DETOXIFICATION 15, found in Arabidopsis thaliana (Mouse-ear cress).